Here is an 81-residue protein sequence, read N- to C-terminus: Conotoxin Im6.1 (81 aa).

Residues Met1–Pro20 form the signal peptide. A propeptide spanning residues Glu21 to Arg47 is cleaved from the precursor. Cystine bridges form between Cys49–Cys61, Cys54–Cys67, and Cys60–Cys76.

This sequence belongs to the conotoxin M superfamily. Expressed by the venom duct.

It is found in the secreted. This is Conotoxin Im6.1 from Conus imperialis (Imperial cone).